The primary structure comprises 550 residues: Leiomodin-2 (550 aa).

Positions 1–47 (MSTFGYRRGLSKYESIDEDELLASLSPEELKELERELEDIEPDRNLP) are interaction with tropomyosin alpha. 3 interaction with actin regions span residues 1 to 165 (MSTF…TDNS), 166 to 500 (KPKT…KEIK), and 524 to 543 (VHENLMEAIRGSSIRQLRRV). Phosphoserine occurs at positions 11, 15, and 24. The segment covering 84–94 (ERLGECGKVAE) has biased composition (basic and acidic residues). 2 disordered regions span residues 84–202 (ERLG…PCGN) and 359–527 (MDKQ…VHEN). Positions 91–147 (KVAEEDKEESEEELIFTESNSEVSEEVCTEDEEESQEEEEDSEEEEDSEEEEETTEA) form a coiled coil. 2 stretches are compositionally biased toward acidic residues: residues 95–105 (EDKEESEEELI) and 113–145 (VSEEVCTEDEEESQEEEEDSEEEEDSEEEEETT). 2 stretches are compositionally biased toward polar residues: residues 151-164 (INGTVSYNSVNTDN) and 170-193 (FKSQIENINLTNGNSGRTQRNSES). Positions 359 to 377 (MDKQRQKRMQEQKQQEGHD) are enriched in basic and acidic residues. Polar residues predominate over residues 391-402 (TPGSSPYASPRQ). The residue at position 407 (S407) is a Phosphoserine. The segment covering 421–452 (PPSPVAPPPPPPPPPLPPHMLPPPPPPPAPPL) has biased composition (pro residues). The span at 468–479 (QQESAQRALQNG) shows a compositional bias: polar residues. The segment covering 480–490 (QRKKKGKKVKK) has biased composition (basic residues). Residues 497 to 515 (KEIKNSLRSVQEKKMEDSS) show a composition bias toward basic and acidic residues. Residues 524-543 (VHENLMEAIRGSSIRQLRRV) enclose the WH2 domain.

Belongs to the tropomodulin family. Can bind at least three actin monomers and thereby provides a nucleus for actin filament formation. Interacts (via N-terminus) with tropomyosin alpha (TPM1) (via N-terminus). May also interact with TPM2 (via N-terminus). Interacts with FLII. Detected in neonate heart (at protein level). Detected in embryonic heart and in pharyngeal arches. Detected in adult heart.

It is found in the cytoplasm. Its subcellular location is the myofibril. The protein resides in the sarcomere. The protein localises to the m line. It localises to the cytoskeleton. Its function is as follows. Mediates nucleation of actin filaments and thereby promotes actin polymerization. Plays a role in the regulation of actin filament length. Required for normal sarcomere organization in the heart, and for normal heart function. The polypeptide is Leiomodin-2 (Lmod2) (Mus musculus (Mouse)).